The following is a 324-amino-acid chain: MSYFKTALLLAGLTALFMGVGYLIGGANGALIALVVAAAMNIFTYWNSDRMVLSMYGAQEVDERSAPDLYRMVAELAGRASLPMPRVFIMDNPQPNAFATGRNPENAAVAVTTGLMNQLSREELAGVVAHELAHIKNHDTLLMTITATIAGAISMVAQFGMFFGGNRENNNGPGLIGSLALMILAPLGAMLVQMAISRTREYAADEMGARICGQPMWLASALGRIEAAAHQVPNYDAERSPATAHMFIINPLSGQGMDNLFATHPSTDNRVAALQRLAAEIGGSSYRPASTFSRGAGTAASSGTPRGTGRSPWGGQPRGRGPWG.

The next 2 helical transmembrane spans lie at 7–24 (ALLLAGLTALFMGVGYLI) and 29–46 (GALIALVVAAAMNIFTYW). His-130 is a Zn(2+) binding site. Residue Glu-131 is part of the active site. His-134 provides a ligand contact to Zn(2+). The next 2 membrane-spanning stretches (helical) occupy residues 145 to 165 (ITATIAGAISMVAQFGMFFGG) and 172 to 192 (GPGLIGSLALMILAPLGAMLV). Position 201 (Glu-201) interacts with Zn(2+). Polar residues predominate over residues 288-305 (PASTFSRGAGTAASSGTP). The tract at residues 288-324 (PASTFSRGAGTAASSGTPRGTGRSPWGGQPRGRGPWG) is disordered.

The protein belongs to the peptidase M48B family. It depends on Zn(2+) as a cofactor.

The protein localises to the cell inner membrane. This Rhodopseudomonas palustris (strain TIE-1) protein is Protease HtpX homolog.